A 437-amino-acid polypeptide reads, in one-letter code: GTPase Der (437 aa).

EngA-type G domains lie at 3–168 (PLIA…PETE) and 178–353 (IQLA…QNRS). GTP-binding positions include 9 to 16 (GRPNVGKS), 56 to 60 (DTGGY), 120 to 123 (NKVE), 184 to 191 (GRPNVGKS), 231 to 235 (DTAGL), and 296 to 299 (NKWD). The KH-like domain maps to 354–437 (RKISTSVLNK…VPISMRFMQK (84 aa)).

The protein belongs to the TRAFAC class TrmE-Era-EngA-EngB-Septin-like GTPase superfamily. EngA (Der) GTPase family. Associates with the 50S ribosomal subunit.

In terms of biological role, GTPase that plays an essential role in the late steps of ribosome biogenesis. The protein is GTPase Der of Pelodictyon phaeoclathratiforme (strain DSM 5477 / BU-1).